Reading from the N-terminus, the 483-residue chain is Prenyltransferase vrtC (483 aa).

Belongs to the tryptophan dimethylallyltransferase family.

The protein operates within secondary metabolite biosynthesis; terpenoid biosynthesis. Functionally, prenyltransferase; part of the gene cluster that mediates the biosynthesis of viridicatumtoxin, a tetracycline-like fungal meroterpenoid with a unique, fused spirobicyclic ring system. The first step of the pathway is the production of the malonamoyl-CoA starter unit for the polyketide synthase vrtA. The aldolase vrtJ may be involved in the synthesis of the malonamate substrate for malonamoyl-CoA synthetase vrtB. The polyketide synthase vrtA then may utilize the malonamoyl-CoA starter unit, followed by sequential condensation of eight malonyl-CoA units to form the polyketide backbone. The cyclization of the last ring could be mediated by the lactamase-like protein vrtG. The proposed post-PKS tailoring steps are a hydroxylation at C5 catalyzed the cytochrome P450 monooxygenase vrtE, a hydroxylation at C12a catalyzed by VrtH and/or VrtI, and an O-methylation by the O-methyltransferase vrtF. VrtC is then proposed to catalyze the transfer of a geranyl group synthesized by vrtD to the aromatic C ring of the tetracyclic polyketide intermediate of viridicatumtoxin to yield previridicatumtoxin. Finally, the cytochrome P450 monooxygenase vrtK catalyzes the spirocyclization of the geranyl moiety of previridicatumtoxin to afford viridicatumtoxin. This is Prenyltransferase vrtC from Penicillium aethiopicum.